The primary structure comprises 207 residues: ATP phosphoribosyltransferase (207 aa).

This sequence belongs to the ATP phosphoribosyltransferase family. Short subfamily. In terms of assembly, heteromultimer composed of HisG and HisZ subunits.

It localises to the cytoplasm. The catalysed reaction is 1-(5-phospho-beta-D-ribosyl)-ATP + diphosphate = 5-phospho-alpha-D-ribose 1-diphosphate + ATP. The protein operates within amino-acid biosynthesis; L-histidine biosynthesis; L-histidine from 5-phospho-alpha-D-ribose 1-diphosphate: step 1/9. Catalyzes the condensation of ATP and 5-phosphoribose 1-diphosphate to form N'-(5'-phosphoribosyl)-ATP (PR-ATP). Has a crucial role in the pathway because the rate of histidine biosynthesis seems to be controlled primarily by regulation of HisG enzymatic activity. In Dictyoglomus turgidum (strain DSM 6724 / Z-1310), this protein is ATP phosphoribosyltransferase (hisG).